The chain runs to 127 residues: MTKDKRYAFSVKVETAFVPDQSDVEQNRYVFTYTVHIENTGNVAAQLISRHWIITDATGKTQEVRGLGVIGQQPLLQPGERFQYTSGTMLNTPVGEMRGFYHITAEDGTQFDSEIAPFQLNMPRVLH.

One can recognise an ApaG domain in the interval 3–127 (KDKRYAFSVK…FQLNMPRVLH (125 aa)).

This chain is Protein ApaG, found in Methylobacillus flagellatus (strain ATCC 51484 / DSM 6875 / VKM B-1610 / KT).